The sequence spans 387 residues: Histone deacetylase 2 (387 aa).

The interval 73–382 is histone deacetylase; sequence KVSIIYSSSY…IENLSRQGLI (310 aa). H201 (proton donor/acceptor) is an active-site residue. Zn(2+)-binding residues include D238, H240, and D318.

This sequence belongs to the histone deacetylase family. HD type 3 subfamily. Zn(2+) serves as cofactor.

It is found in the nucleus. The catalysed reaction is N(6)-acetyl-L-lysyl-[histone] + H2O = L-lysyl-[histone] + acetate. Its function is as follows. Responsible for the deacetylation of lysine residues on the N-terminal part of the core histones (H2A, H2B, H3 and H4). Histone deacetylation gives a tag for epigenetic repression and plays an important role in transcriptional regulation, cell cycle progression and developmental events. Histone deacetylases act via the formation of large multiprotein complexes. The protein is Histone deacetylase 2 (HDA2) of Arabidopsis thaliana (Mouse-ear cress).